The chain runs to 327 residues: GMP reductase (327 aa).

The active-site Thioimidate intermediate is Cys-176. 205 to 228 (IIADGGIRTHGDIAKSIRFGASMV) is a binding site for NADP(+).

Belongs to the IMPDH/GMPR family. GuaC type 2 subfamily.

It catalyses the reaction IMP + NH4(+) + NADP(+) = GMP + NADPH + 2 H(+). Its function is as follows. Catalyzes the irreversible NADPH-dependent deamination of GMP to IMP. It functions in the conversion of nucleobase, nucleoside and nucleotide derivatives of G to A nucleotides, and in maintaining the intracellular balance of A and G nucleotides. The chain is GMP reductase from Streptococcus suis (strain 98HAH33).